Consider the following 640-residue polypeptide: 1,4-alpha-glucan branching enzyme GlgB (640 aa).

The active-site Nucleophile is D318. E371 functions as the Proton donor in the catalytic mechanism.

The protein belongs to the glycosyl hydrolase 13 family. GlgB subfamily. As to quaternary structure, monomer.

The enzyme catalyses Transfers a segment of a (1-&gt;4)-alpha-D-glucan chain to a primary hydroxy group in a similar glucan chain.. The protein operates within glycan biosynthesis; glycogen biosynthesis. Its function is as follows. Catalyzes the formation of the alpha-1,6-glucosidic linkages in glycogen by scission of a 1,4-alpha-linked oligosaccharide from growing alpha-1,4-glucan chains and the subsequent attachment of the oligosaccharide to the alpha-1,6 position. The protein is 1,4-alpha-glucan branching enzyme GlgB of Francisella tularensis subsp. holarctica (strain FTNF002-00 / FTA).